Here is a 74-residue protein sequence, read N- to C-terminus: Translation initiation factor IF-1 (74 aa).

Positions 1–72 constitute an S1-like domain; it reads MGKEDVIRME…TRGRIVYRKK (72 aa).

It belongs to the IF-1 family. Component of the 30S ribosomal translation pre-initiation complex which assembles on the 30S ribosome in the order IF-2 and IF-3, IF-1 and N-formylmethionyl-tRNA(fMet); mRNA recruitment can occur at any time during PIC assembly.

The protein localises to the cytoplasm. In terms of biological role, one of the essential components for the initiation of protein synthesis. Stabilizes the binding of IF-2 and IF-3 on the 30S subunit to which N-formylmethionyl-tRNA(fMet) subsequently binds. Helps modulate mRNA selection, yielding the 30S pre-initiation complex (PIC). Upon addition of the 50S ribosomal subunit IF-1, IF-2 and IF-3 are released leaving the mature 70S translation initiation complex. The polypeptide is Translation initiation factor IF-1 (Thermotoga petrophila (strain ATCC BAA-488 / DSM 13995 / JCM 10881 / RKU-1)).